A 287-amino-acid polypeptide reads, in one-letter code: ATP synthase gamma chain (287 aa).

Belongs to the ATPase gamma chain family. F-type ATPases have 2 components, CF(1) - the catalytic core - and CF(0) - the membrane proton channel. CF(1) has five subunits: alpha(3), beta(3), gamma(1), delta(1), epsilon(1). CF(0) has three main subunits: a, b and c.

The protein resides in the cell inner membrane. In terms of biological role, produces ATP from ADP in the presence of a proton gradient across the membrane. The gamma chain is believed to be important in regulating ATPase activity and the flow of protons through the CF(0) complex. This Xylella fastidiosa (strain M12) protein is ATP synthase gamma chain.